Here is a 105-residue protein sequence, read N- to C-terminus: Prothymosin alpha-A (105 aa).

Positions 1–30 are enriched in basic and acidic residues; it reads MADTKVDTSKEVSAKDLKEKKQVEEAENGK. The segment at 1 to 105 is disordered; sequence MADTKVDTSK…VDPKKQKTDV (105 aa). Acidic residues-rich tracts occupy residues 39–78 and 87–96; these read ENEENGDQENEVDEEDDDVAEEDEEDDGEGDDDDEDEEAE and EDDDDDEDDV.

Belongs to the pro/parathymosin family. As to expression, at the 20-somite stage (18 hpf), expressed on the dorsal side of the embryo in the developing central and peripheral nervous system (CNS and PNS), in the tail bud and the pronephric ducts. In the PNS, expressed in the otic vesicle, trigeminal ganglion and the anterior lateral line placode. Localized throughout the hindbrain, with highest expression in rhombomeres 3 and 4. In the head, expressed in the olfactory placode and in the diencephalic region. At the end of the segmentation period (20 hpf), expression begins in the newly forming endodermal pouches, and weakly in the pharyngeal arch precursor cells. During the early pharyngula period, expressed in the pectoral fin bud, the developing retina, and still present in the central nervous system and endodermal pouches. In the tail, expressed in the spinal cord and posterior lateral line precursors. Weakly expressed in the pronephric ducts, only in the corpuscles of Stanius. At 48 hpf, still expressed in the retina and brain, where expression is almost uniform. At this stage, expression is decreased in the spinal cord and is absent from the lateral line cells and pronephric ducts, but appears in the intestine and continues in the pharyngeal arches. In 72 hpf embryos, expression in the brain remains uniform but is restricted to amacrine cells in the retina. In the pharyngeal arches, expression continues to be limited to the ectodermal and endodermal covering cells.

It localises to the nucleus. This is Prothymosin alpha-A (ptmaa) from Danio rerio (Zebrafish).